The following is a 442-amino-acid chain: 3-ketoacyl-CoA thiolase (442 aa).

The active-site Acyl-thioester intermediate is the Cys105. Catalysis depends on proton acceptor residues His398 and Cys428.

The protein belongs to the thiolase-like superfamily. Thiolase family. Heterotetramer of two alpha chains (FadJ) and two beta chains (FadI).

Its subcellular location is the cytoplasm. It carries out the reaction an acyl-CoA + acetyl-CoA = a 3-oxoacyl-CoA + CoA. It participates in lipid metabolism; fatty acid beta-oxidation. Its function is as follows. Catalyzes the final step of fatty acid oxidation in which acetyl-CoA is released and the CoA ester of a fatty acid two carbons shorter is formed. This chain is 3-ketoacyl-CoA thiolase, found in Aliivibrio fischeri (strain ATCC 700601 / ES114) (Vibrio fischeri).